We begin with the raw amino-acid sequence, 396 residues long: Dimethyladenosine transferase 2, mitochondrial (396 aa).

Residues 1–19 (MWIPVVGLPRRLRLSALAG) constitute a mitochondrion transit peptide. The interval 44–64 (LSDSSPQLWPEPDFRNPPRKA) is disordered. The S-adenosyl-L-methionine site is built by valine 75, glutamate 124, and aspartate 150. The segment at 330–331 (RR) is DNA-binding.

This sequence belongs to the class I-like SAM-binding methyltransferase superfamily. rRNA adenine N(6)-methyltransferase family. KsgA subfamily. As to quaternary structure, homodimer. Component of the mitochondrial transcription initiation complex, composed at least of TFB2M, TFAM and POLRMT. In this complex TFAM recruits POLRMT to the promoter whereas TFB2M induces structural changes in POLRMT to enable promoter opening and trapping of the DNA non-template strand. Interacts with mitochondrial RNA polymerase POLRMT. Interacts with TFAM. As to expression, ubiquitously expressed.

The protein localises to the mitochondrion. The enzyme catalyses adenosine in rRNA + S-adenosyl-L-methionine = N(6)-methyladenosine in rRNA + S-adenosyl-L-homocysteine + H(+). Its function is as follows. S-adenosyl-L-methionine-dependent rRNA methyltransferase which may methylate two specific adjacent adenosines in the loop of a conserved hairpin near the 3'-end of 12S mitochondrial rRNA. Component of the mitochondrial transcription initiation complex, composed at least of TFB2M, TFAM and POLRMT that is required for basal transcription of mitochondrial DNA. In this complex, TFAM recruits POLRMT to a specific promoter whereas TFB2M induces structural changes in POLRMT to enable promoter opening and trapping of the DNA non-template strand. Stimulates transcription independently of the methyltransferase activity. This is Dimethyladenosine transferase 2, mitochondrial from Homo sapiens (Human).